A 713-amino-acid polypeptide reads, in one-letter code: Serologically defined colon cancer antigen 8 (713 aa).

A phosphoserine mark is found at serine 4 and serine 28. Positions glutamine 84–arginine 103 are disordered. Positions isoleucine 129–glutamate 175 form a coiled coil. The tract at residues glutamate 194 to lysine 215 is disordered. The segment covering threonine 201 to aspartate 212 has biased composition (basic and acidic residues). A sufficient for homodimerization region spans residues alanine 216–cysteine 713. Coiled coils occupy residues leucine 223–alanine 273 and glutamate 348–serine 707. The mediates interaction with OFD1 stretch occupies residues histidine 533–cysteine 713.

As to quaternary structure, homodimer. Interacts with OFD1; the interaction is direct. Interacts with FAM161A. Interacts with RABEP2, ERC1 and CEP131. As to expression, expressed in thymus, prostate, testis, ovary, small intestine, colon, mucosa, colon and renal cancer tumors.

The protein localises to the cytoplasm. It is found in the cytoskeleton. The protein resides in the microtubule organizing center. Its subcellular location is the centrosome. It localises to the centriole. The protein localises to the cilium basal body. It is found in the cell junction. In terms of biological role, plays a role in the establishment of cell polarity and epithelial lumen formation. Also plays an essential role in ciliogenesis and subsequent Hedgehog signaling pathway that requires the presence of intact primary cilia for pathway activation. Mechanistically, interacts with and mediates RABEP2 centrosomal localization which is critical for ciliogenesis. This is Serologically defined colon cancer antigen 8 (SDCCAG8) from Homo sapiens (Human).